The following is a 1659-amino-acid chain: eIF-2-alpha kinase GCN2 (1659 aa).

An RWD domain is found at 17-128 (NELEAIRSIY…SFTQEKLDEF (112 aa)). A disordered region spans residues 149–170 (KEQLEKEEREKQQETIKKRSDE). Protein kinase domains follow at residues 256–527 (LVKP…MKFL) and 599–981 (FEEI…SGWL). ATP contacts are provided by residues 605 to 613 (LGQGAFGQV) and Lys628. 2 disordered regions span residues 671-691 (NVFE…DFEE) and 727-768 (FENS…VPRR). Ser761 carries the post-translational modification Phosphoserine. Asp835 serves as the catalytic Proton acceptor. Thr882 and Thr887 each carry phosphothreonine; by autocatalysis. The segment at 999–1519 (NPSSPWQQQV…EFKRWDENSS (521 aa)) is histidyl-tRNA synthetase-like.

Belongs to the protein kinase superfamily. Ser/Thr protein kinase family. GCN2 subfamily. In terms of assembly, homodimer; homodimerization is important for kinase activation by uncharged tRNAs. Interacts (via N-terminal RWD domain) with GCN1 (via N- and C-terminus); this interaction stimulates GCN2 kinase activity in a GCN20-dependent manner in response to amino acid starvation. Interacts (via N-terminus) with the GCN1-GCN20 complex on translating ribosomes in amino acid-starved cells; GCN1 may bind near the ribosomal A-site and promotes the transfer of uncharged tRNAs from the A-site to the tRNA-binding domain in GCN2 for its subsequent kinase activation, and hence allowing GCN4 translational activation and derepression of amino acid biosynthetic genes. Interacts (via C-terminus) with TIF11; this interaction is direct, occurs in amino acid-repleted cells, may be stabilized in a ribosome-dependent manner, reduces GCN2-mediated eIF-2-alpha phosphorylation but not GCN2 autophosphorylation and is lost in amino acid-starved cells and by uncharged tRNAs. Associates (via C-terminus) with ribosomes. Mg(2+) serves as cofactor. In terms of processing, autophosphorylated, autophosphorylation on Thr-882 and Thr-887 increases kinase activity.

Its subcellular location is the cytoplasm. The enzyme catalyses L-seryl-[protein] + ATP = O-phospho-L-seryl-[protein] + ADP + H(+). It catalyses the reaction L-threonyl-[protein] + ATP = O-phospho-L-threonyl-[protein] + ADP + H(+). Its activity is regulated as follows. The integrated stress response (ISR) is activated in response to conditions that promote ribosome collisions: GCN1, which acts as a ribosome collision sensor, activates GCN2. The RQC pathway and the integrated stress response (ISR) antagonize each other: HEL2 prevents the activation of GCN2, while GCN2 suppresses RQC activation. Ribosome stalling-induced integrated stress response prefers ribosomes with empty A sites. The kinase activity is stimulated upon binding to uncharged tRNAs. Its function is as follows. Metabolic-stress sensing protein kinase that phosphorylates the alpha subunit of eukaryotic translation initiation factor 2 (eIF-2-alpha/SUI2) on 'Ser-52' in response to low amino acid, carbon, or purine availability. Required for adapatation to nutrient starvation by acting as a key component of the integrated stress response (ISR), by which cells alter their translational and transcriptional output in response to starvation. Converts phosphorylated eIF-2-alpha/SUI2 either to a competitive inhibitor of translation initiation factor eIF-2B, leading to a global protein synthesis repression, and thus to a reduced overall utilization of amino acids, or to a translational initiation activation of specific mRNAs, such as the transcriptional activator GCN4, and hence allowing GCN4-mediated reprogramming of transcription to alleviate nutrient depletion. Binds uncharged tRNAs. Binds to aminoacylated tRNA(Phe) less tightly than to deacylated tRNA(Phe). Binds to double-stranded RNA. This is eIF-2-alpha kinase GCN2 from Saccharomyces cerevisiae (strain ATCC 204508 / S288c) (Baker's yeast).